The primary structure comprises 986 residues: Vacuolar membrane protease (986 aa).

Topologically, residues 1-20 (MATPRAQKFNPIAFTPGPVT) are cytoplasmic. Residues 21–41 (LITTIVYLALLIPILVISLVV) traverse the membrane as a helical segment. Residues 42-392 (PPAPETSPEG…AFAVFRLHTL (351 aa)) lie on the Vacuolar side of the membrane. N-linked (GlcNAc...) asparagine glycans are attached at residues N53, N116, and N119. 2 residues coordinate Zn(2+): H175 and D187. Catalysis depends on E221, which acts as the Proton acceptor. Position 222 (E222) interacts with Zn(2+). The N-linked (GlcNAc...) asparagine glycan is linked to N238. Positions 247 and 320 each coordinate Zn(2+). Residues 393–413 (FALSVTLLIVAPLVIFITAIV) form a helical membrane-spanning segment. Topologically, residues 414-447 (LSKTDRMYLFSMSKSLGGTDERVSLRGLRGLFRT) are cytoplasmic. Residues 448–468 (PIILAVATVIPIGLAYLLEKV) traverse the membrane as a helical segment. Residues 469–477 (NPYIVHSSQ) are Vacuolar-facing. A helical transmembrane segment spans residues 478-498 (FSVWSMMISVWIFLAWFLACA). The Cytoplasmic segment spans residues 499 to 509 (ADFFRPSALHR). A helical membrane pass occupies residues 510-530 (AYSYTWIFIATWVMLVINTVY). Residues 531 to 534 (ANQK) are Vacuolar-facing. Residues 535-555 (GIAAGYFVFFYFSGSFLATWV) form a helical membrane-spanning segment. At 556-665 (SYLELFALPR…WSWTLPRWTW (110 aa)) the chain is on the cytoplasmic side. The interval 595–620 (ELPSDTGPHAEYPGDADETDPTESTS) is disordered. The helical transmembrane segment at 666 to 686 (VLQLLLLAPIVLILVGQLALF) threads the bilayer. Residues 687–702 (LTTSMSQVGSDGVSTF) are Vacuolar-facing. A helical membrane pass occupies residues 703 to 723 (IVYLACAVFTTLLFAPLFPFI). The Cytoplasmic portion of the chain corresponds to 724 to 729 (HRFTYH). Residues 730–750 (IPTFLFLVFVGTLIYNLVAFP) form a helical membrane-spanning segment. Topologically, residues 751–986 (FSPANRLKMF…VEASHGITIQ (236 aa)) are vacuolar. Residues N797, N840, and N948 are each glycosylated (N-linked (GlcNAc...) asparagine).

Belongs to the peptidase M28 family. Zn(2+) serves as cofactor.

The protein localises to the vacuole membrane. May be involved in vacuolar sorting and osmoregulation. This is Vacuolar membrane protease from Blastomyces gilchristii (strain SLH14081) (Blastomyces dermatitidis).